Consider the following 380-residue polypeptide: ER-phagy receptor 1 (380 aa).

Residues 9–74 (DCYEILQVNH…DKRKWHEKDY (66 aa)) enclose the J domain. The segment at 270-294 (IMCMVCNKNFRSQNQLENHENSKKH) adopts a C2H2-type zinc-finger fold. A disordered region spans residues 307 to 337 (KHAKEAQKNAESNKQPEDAPSESPYSNKVSS). At Ser-344 the chain carries Phosphoserine. The AIM motif lies at 352 to 355 (FTFV). The short motif at 361–367 (EFYTASE) is the FFAT element.

As to quaternary structure, interacts (via the AIM motif) with atg8. Interacts (via the FFAT motif) with the vesicle-associated membrane protein-associated protein (VAP) family proteins scs2 and scs22.

Its subcellular location is the endoplasmic reticulum. The protein resides in the preautophagosomal structure. In terms of biological role, reticulophagy receptor required for autophagosomal sequestration of endoplasmic reticulum (ER) membranes during ER stress. Confers resistance to ER stress by promoting the autophagic degradation of the ER (ER-phagy or reticulophagy). Acts as a bridging molecule to mediate the association between atg8 on the autophagic membrane and the vesicle-associated membrane protein-associated proteins (VAPs) scs2 and scs22 on the ER. May play a role in meiosis. This is ER-phagy receptor 1 from Schizosaccharomyces pombe (strain 972 / ATCC 24843) (Fission yeast).